The primary structure comprises 620 residues: Delta(14)-sterol reductase LBR (620 aa).

A Tudor domain is found at 1–62 (MPGRKFADGE…DIKPLKSFKQ (62 aa)). Residues 1 to 215 (MPGRKFADGE…TPQRRDLEFG (215 aa)) are Nuclear-facing. A disordered region spans residues 52 to 111 (SDIKPLKSFKQRKSGSTSSSPSRRRSSRSRSRSRSRSPGRAPKGSRRSVSASYQADAKEK). K55 bears the N6-acetyllysine mark. A phosphoserine mark is found at S59 and S67. Residues S71 and S86 each carry the phosphoserine; by CDK1 modification. Positions 73-88 (SRRRSSRSRSRSRSRS) are enriched in basic residues. At S88 the chain carries Phosphoserine. A glycan (O-linked (GlcNAc) serine) is linked at S96. A phosphoserine mark is found at S99 and S101. T123 carries the phosphothreonine modification. Residue S133 is modified to Phosphoserine. T205 is modified (phosphothreonine). The next 8 helical transmembrane spans lie at 216-236 (GVPG…LLLL), 263-283 (VCGV…LPVG), 304-324 (LYAF…DIEL), 331-351 (FLQF…YLYA), 452-472 (IIHD…VPFT), 486-506 (DLSW…YVIF), 525-547 (LAHL…WWGF), and 566-586 (PCGF…ALLI). N6-acetyllysine is present on residues K599 and K606.

The protein belongs to the ERG4/ERG24 family. In terms of assembly, interacts with CBX5. Interacts with DNA. Interaction with DNA is sequence independent with higher affinity for supercoiled and relaxed circular DNA than linear DNA. Interacts with lamin B. Interacts with CLNK. Interacts with TMEM147; promoting LBR localization to the nucleus inner membrane. In terms of processing, phosphorylated by CDK1 in mitosis when the inner nuclear membrane breaks down into vesicles that dissociate from the lamina and the chromatin. It is phosphorylated by different protein kinases in interphase when the membrane is associated with these structures. Phosphorylation of LBR and HP1 proteins may be responsible for some of the alterations in chromatin organization and nuclear structure which occur at various times during the cell cycle. Phosphorylated by SRPK1. In late anaphase LBR is dephosphorylated, probably by PP1 and/or PP2A, allowing reassociation with chromatin.

Its subcellular location is the nucleus inner membrane. It localises to the nucleus. It is found in the cytoplasm. The protein resides in the endoplasmic reticulum membrane. The enzyme catalyses 5alpha-cholest-8,14-dien-3beta-ol + NADPH + H(+) = 5alpha-cholest-8-en-3beta-ol + NADP(+). The catalysed reaction is 4,4-dimethyl-5alpha-cholesta-8,24-dien-3beta-ol + NADP(+) = 4,4-dimethyl-5alpha-cholesta-8,14,24-trien-3beta-ol + NADPH + H(+). It carries out the reaction 4,4-dimethyl-8,14-cholestadien-3beta-ol + NADPH + H(+) = 4,4-dimethyl-5alpha-cholest-8-en-3beta-ol + NADP(+). The protein operates within steroid biosynthesis; cholesterol biosynthesis. Its function is as follows. Catalyzes the reduction of the C14-unsaturated bond of lanosterol, as part of the metabolic pathway leading to cholesterol biosynthesis. Plays a critical role in myeloid cell cholesterol biosynthesis which is essential to both myeloid cell growth and functional maturation. Mediates the activation of NADPH oxidases, perhaps by maintaining critical levels of cholesterol required for membrane lipid raft formation during neutrophil differentiation. Anchors the lamina and the heterochromatin to the inner nuclear membrane. The polypeptide is Delta(14)-sterol reductase LBR (Lbr) (Rattus norvegicus (Rat)).